Consider the following 130-residue polypeptide: Small ribosomal subunit protein uS9 (130 aa).

The protein belongs to the universal ribosomal protein uS9 family.

This chain is Small ribosomal subunit protein uS9, found in Aliivibrio fischeri (strain MJ11) (Vibrio fischeri).